The sequence spans 562 residues: O-fucosyltransferase 4 (562 aa).

The segment at 10–46 (SIQNRLPGSDHTTPSPPTSPHLCRSRSKSSSVSGQQQ) is disordered. Residues 37-46 (KSSSVSGQQQ) are compositionally biased toward low complexity. A helical; Signal-anchor for type II membrane protein transmembrane segment spans residues 67-87 (GILLFAPIIYISCMLFHLHAA). Residues Asn-122, Asn-146, Asn-185, and Asn-239 are each glycosylated (N-linked (GlcNAc...) asparagine). Position 332 to 334 (332 to 334 (HLR)) interacts with substrate. Residues Asn-404, Asn-420, Asn-450, and Asn-555 are each glycosylated (N-linked (GlcNAc...) asparagine).

The protein belongs to the glycosyltransferase GT106 family.

It is found in the membrane. The protein operates within glycan metabolism. The protein is O-fucosyltransferase 4 of Arabidopsis thaliana (Mouse-ear cress).